Here is a 429-residue protein sequence, read N- to C-terminus: Histidinol dehydrogenase (429 aa).

NAD(+)-binding residues include Tyr127, Gln188, and Asn211. Substrate is bound by residues Ser234, Gln256, and His259. The Zn(2+) site is built by Gln256 and His259. Active-site proton acceptor residues include Glu324 and His325. Positions 325, 358, 412, and 417 each coordinate substrate. Asp358 contributes to the Zn(2+) binding site. His417 provides a ligand contact to Zn(2+).

The protein belongs to the histidinol dehydrogenase family. The cofactor is Zn(2+).

The enzyme catalyses L-histidinol + 2 NAD(+) + H2O = L-histidine + 2 NADH + 3 H(+). It functions in the pathway amino-acid biosynthesis; L-histidine biosynthesis; L-histidine from 5-phospho-alpha-D-ribose 1-diphosphate: step 9/9. Catalyzes the sequential NAD-dependent oxidations of L-histidinol to L-histidinaldehyde and then to L-histidine. This chain is Histidinol dehydrogenase, found in Bacillus cereus (strain ATCC 10987 / NRS 248).